Reading from the N-terminus, the 323-residue chain is Protein translocase subunit SecF (323 aa).

Transmembrane regions (helical) follow at residues 19–39, 138–158, 162–182, 189–209, 244–264, and 269–289; these read GVIV…FKGF, ILSL…RYEW, LASV…VIVF, EVIA…IIIF, LTVF…IIGF, and LIGT…VALL.

The protein belongs to the SecD/SecF family. SecF subfamily. Forms a complex with SecD. Part of the essential Sec protein translocation apparatus which comprises SecA, SecYEG and auxiliary proteins SecDF-YajC and YidC.

The protein resides in the cell inner membrane. Part of the Sec protein translocase complex. Interacts with the SecYEG preprotein conducting channel. SecDF uses the proton motive force (PMF) to complete protein translocation after the ATP-dependent function of SecA. In Helicobacter pylori (strain ATCC 700392 / 26695) (Campylobacter pylori), this protein is Protein translocase subunit SecF.